A 444-amino-acid chain; its full sequence is MAERKFFGTDGIRGLVGEGPITPEFVLKLGWAAGRVLSQQGTKKVLIGKDTRISGYMLESALEAGLAAAGLQQFTGPMPTPAVAYLTRTFRAEAGIVISASHNPYYDNGIKFFSSEGTKLPDAIELAIEAEMEKPLTCVESAMLGKAYRINDAAGRYIEFCKGTFPSQYDLSEYKIVVDCAHGATYHIAPNVFRELGAEVITIGCEPNGININDQVGATDVRALQAKVLEEKADFGIALDGDGDRVIMVDNEGNKVDGDQIAYIVARDALRRGELKGGVVGTLMTNLGMEVALKNLGIPFVRSKVGDRYVMEELQKHNWLIGAENSGHVILLDKITTGDGIVAGLQVMASIVGSKMTLKELSDGMTLFPQVLENIRFKGEGNPLESDAVIAAQKAVEAKLGDTGRVLLRKSGTEPLIRVMVEGENADLVQQYALEIAQAVKDNC.

The Phosphoserine intermediate role is filled by S101. Residues S101, D240, D242, and D244 each coordinate Mg(2+). S101 carries the phosphoserine modification.

Belongs to the phosphohexose mutase family. It depends on Mg(2+) as a cofactor. Activated by phosphorylation.

The enzyme catalyses alpha-D-glucosamine 1-phosphate = D-glucosamine 6-phosphate. Catalyzes the conversion of glucosamine-6-phosphate to glucosamine-1-phosphate. The polypeptide is Phosphoglucosamine mutase (Photobacterium profundum (strain SS9)).